A 245-amino-acid chain; its full sequence is MPDYSYRPTIGRTYVYDNKYYKNLGSVIKNAKRKKHLLEHEEDEKHLDPLDHYMVAEDPFLGPGKNQKLTLFKEIRNVKPDTMKLIVNWSGKEFLRETWTRFVEDSFPIVNDQEVMDVFLVVNMRPTRPNRCYKFLAQHALRWDCDYVPHEVIRIVEPSYVGMNNEYRISLAKKGGGCPIMNIHAEYTNSFESFVNRVIWENFYKPIVYIGTDSSEEEEILIEVSLVFKVKEFAPDAPLFTGPAY.

This sequence belongs to the polyhedrin family.

Major component of the virus occlusion bodies, which are large proteinaceous structures (polyhedra), that protect the virus from the outside environment for extended periods until they are ingested by insect larvae. The polypeptide is Polyhedrin (PH) (Orgyia pseudotsugata multicapsid polyhedrosis virus (OpMNPV)).